The sequence spans 176 residues: Peptide deformylase (176 aa).

Fe cation contacts are provided by Cys94 and His136. The active site involves Glu137. Residue His140 coordinates Fe cation.

The protein belongs to the polypeptide deformylase family. The cofactor is Fe(2+).

The enzyme catalyses N-terminal N-formyl-L-methionyl-[peptide] + H2O = N-terminal L-methionyl-[peptide] + formate. In terms of biological role, removes the formyl group from the N-terminal Met of newly synthesized proteins. Requires at least a dipeptide for an efficient rate of reaction. N-terminal L-methionine is a prerequisite for activity but the enzyme has broad specificity at other positions. This Bartonella henselae (strain ATCC 49882 / DSM 28221 / CCUG 30454 / Houston 1) (Rochalimaea henselae) protein is Peptide deformylase.